A 631-amino-acid chain; its full sequence is Phosphomethylpyrimidine synthase (631 aa).

Substrate is bound by residues asparagine 231, methionine 260, tyrosine 289, histidine 325, serine 345–glycine 347, aspartate 386–arginine 389, and glutamate 425. Histidine 429 contacts Zn(2+). Tyrosine 452 serves as a coordination point for substrate. Histidine 493 contributes to the Zn(2+) binding site. Residues cysteine 573, cysteine 576, and cysteine 581 each contribute to the [4Fe-4S] cluster site.

Belongs to the ThiC family. In terms of assembly, homodimer. The cofactor is [4Fe-4S] cluster.

The enzyme catalyses 5-amino-1-(5-phospho-beta-D-ribosyl)imidazole + S-adenosyl-L-methionine = 4-amino-2-methyl-5-(phosphooxymethyl)pyrimidine + CO + 5'-deoxyadenosine + formate + L-methionine + 3 H(+). Its pathway is cofactor biosynthesis; thiamine diphosphate biosynthesis. Catalyzes the synthesis of the hydroxymethylpyrimidine phosphate (HMP-P) moiety of thiamine from aminoimidazole ribotide (AIR) in a radical S-adenosyl-L-methionine (SAM)-dependent reaction. In Acinetobacter baylyi (strain ATCC 33305 / BD413 / ADP1), this protein is Phosphomethylpyrimidine synthase.